The primary structure comprises 215 residues: N-(5'-phosphoribosyl)anthranilate isomerase (215 aa).

Belongs to the TrpF family.

It catalyses the reaction N-(5-phospho-beta-D-ribosyl)anthranilate = 1-(2-carboxyphenylamino)-1-deoxy-D-ribulose 5-phosphate. The protein operates within amino-acid biosynthesis; L-tryptophan biosynthesis; L-tryptophan from chorismate: step 3/5. This chain is N-(5'-phosphoribosyl)anthranilate isomerase, found in Rhizobium meliloti (strain 1021) (Ensifer meliloti).